We begin with the raw amino-acid sequence, 385 residues long: Succinate--CoA ligase [ADP-forming] subunit beta (385 aa).

The region spanning 9–244 (KEVLRKYGVS…LDEEDPKEIE (236 aa)) is the ATP-grasp domain. ATP contacts are provided by residues Lys46, 53-55 (GRG), Glu99, Cys102, and Glu107. Positions 199 and 213 each coordinate Mg(2+). Residues Asn264 and 321 to 323 (GIM) each bind substrate.

Belongs to the succinate/malate CoA ligase beta subunit family. Heterotetramer of two alpha and two beta subunits. Mg(2+) is required as a cofactor.

It catalyses the reaction succinate + ATP + CoA = succinyl-CoA + ADP + phosphate. The enzyme catalyses GTP + succinate + CoA = succinyl-CoA + GDP + phosphate. It participates in carbohydrate metabolism; tricarboxylic acid cycle; succinate from succinyl-CoA (ligase route): step 1/1. Functionally, succinyl-CoA synthetase functions in the citric acid cycle (TCA), coupling the hydrolysis of succinyl-CoA to the synthesis of either ATP or GTP and thus represents the only step of substrate-level phosphorylation in the TCA. The beta subunit provides nucleotide specificity of the enzyme and binds the substrate succinate, while the binding sites for coenzyme A and phosphate are found in the alpha subunit. This Bacillus velezensis (strain DSM 23117 / BGSC 10A6 / LMG 26770 / FZB42) (Bacillus amyloliquefaciens subsp. plantarum) protein is Succinate--CoA ligase [ADP-forming] subunit beta.